A 65-amino-acid polypeptide reads, in one-letter code: Large ribosomal subunit protein bL35 (65 aa).

Belongs to the bacterial ribosomal protein bL35 family.

This is Large ribosomal subunit protein bL35 from Prochlorococcus marinus (strain MIT 9301).